A 141-amino-acid chain; its full sequence is Hemoglobin subunit alpha (141 aa).

The 141-residue stretch at 1–141 folds into the Globin domain; the sequence is VLSASDKTNL…VSTVLTSKYR (141 aa). A Phosphoserine modification is found at Ser-3. An N6-succinyllysine modification is found at Lys-7. Position 8 is a phosphothreonine (Thr-8). Position 11 is an N6-succinyllysine (Lys-11). Lys-16 is subject to N6-acetyllysine; alternate. Lys-16 carries the N6-succinyllysine; alternate modification. Tyr-24 bears the Phosphotyrosine mark. Phosphoserine is present on Ser-35. Lys-40 bears the N6-succinyllysine mark. Ser-49 is modified (phosphoserine). O2 is bound at residue His-58. His-87 provides a ligand contact to heme b. Ser-102 carries the post-translational modification Phosphoserine. Residue Thr-108 is modified to Phosphothreonine. At Ser-124 the chain carries Phosphoserine. Phosphothreonine occurs at positions 134 and 137. A Phosphoserine modification is found at Ser-138.

The protein belongs to the globin family. In terms of assembly, heterotetramer of two alpha chains and two beta chains. In terms of tissue distribution, red blood cells.

Involved in oxygen transport from the lung to the various peripheral tissues. This is Hemoglobin subunit alpha from Blarina brevicauda (Northern short-tailed shrew).